We begin with the raw amino-acid sequence, 582 residues long: DNA repair and recombination protein radC (582 aa).

The DNA-binding element occupies 146–150 (KRALR). Residues 194–204 (KKEPMRVKPSL) show a composition bias toward basic and acidic residues. 3 disordered regions span residues 194–226 (KKEP…NSAA), 310–400 (QIPN…INGQ), and 485–582 (APSG…QHQH). Over residues 326-335 (QNQYTNQRQS) the composition is skewed to polar residues. Positions 516–529 (AAAQNNTAAANRMA) are enriched in low complexity.

It belongs to the RAD52 family. As to quaternary structure, part of a complex that includes RAD51, RAD52 and RAD59.

The protein resides in the nucleus. In terms of biological role, involved in DNA double-strand break (DSB) repair and recombination. Promotes the annealing of complementary single-stranded DNA and by stimulation of the RAD51 recombinase. The polypeptide is DNA repair and recombination protein radC (radC) (Emericella nidulans (strain FGSC A4 / ATCC 38163 / CBS 112.46 / NRRL 194 / M139) (Aspergillus nidulans)).